The primary structure comprises 509 residues: DNA nucleotidylexotransferase (509 aa).

The tract at residues Met1–Ser25 is disordered. The short motif at Pro11–Arg17 is the Nuclear localization signal element. The 98-residue stretch at Pro27–Gln124 folds into the BRCT domain. Residues Ser151–Ala509 form a mediates interaction with DNTTIP2 region. The involved in DNA binding stretch occupies residues Val258–Thr262. Residues Gly333–Lys338 and His342–Asp345 contribute to the a 2'-deoxyribonucleoside 5'-triphosphate site. Residues Asp343, Asp345, and Asp433 each contribute to the Mg(2+) site. Gly448 to Trp449 lines the a 2'-deoxyribonucleoside 5'-triphosphate pocket.

It belongs to the DNA polymerase type-X family. Interacts with PRP19 and DNTTIP1. Forms a ternary complex with DNTTIP2 and core histone. Released from this complex by PCNA. Interacts with TRERF1. Mg(2+) serves as cofactor.

It is found in the nucleus. The catalysed reaction is DNA(n) + a 2'-deoxyribonucleoside 5'-triphosphate = DNA(n+1) + diphosphate. In terms of biological role, template-independent DNA polymerase which catalyzes the random addition of deoxynucleoside 5'-triphosphate to the 3'-end of a DNA initiator. One of the in vivo functions of this enzyme is the addition of nucleotides at the junction (N region) of rearranged Ig heavy chain and T-cell receptor gene segments during the maturation of B- and T-cells. The sequence is that of DNA nucleotidylexotransferase (DNTT) from Bos taurus (Bovine).